Here is a 493-residue protein sequence, read N- to C-terminus: 3-octaprenyl-4-hydroxybenzoate carboxy-lyase (493 aa).

Residue asparagine 175 participates in Mn(2+) binding. Prenylated FMN contacts are provided by residues 178–180 (IYR), 192–194 (RWL), and 197–198 (RG). Glutamate 241 is a Mn(2+) binding site. The active-site Proton donor is aspartate 290.

The protein belongs to the UbiD family. As to quaternary structure, homohexamer. Prenylated FMN serves as cofactor. It depends on Mn(2+) as a cofactor.

Its subcellular location is the cell membrane. It catalyses the reaction a 4-hydroxy-3-(all-trans-polyprenyl)benzoate + H(+) = a 2-(all-trans-polyprenyl)phenol + CO2. It participates in cofactor biosynthesis; ubiquinone biosynthesis. Functionally, catalyzes the decarboxylation of 3-octaprenyl-4-hydroxy benzoate to 2-octaprenylphenol, an intermediate step in ubiquinone biosynthesis. The polypeptide is 3-octaprenyl-4-hydroxybenzoate carboxy-lyase (Photorhabdus laumondii subsp. laumondii (strain DSM 15139 / CIP 105565 / TT01) (Photorhabdus luminescens subsp. laumondii)).